The sequence spans 90 residues: Elongation factor 1-beta (90 aa).

The protein belongs to the EF-1-beta/EF-1-delta family.

In terms of biological role, promotes the exchange of GDP for GTP in EF-1-alpha/GDP, thus allowing the regeneration of EF-1-alpha/GTP that could then be used to form the ternary complex EF-1-alpha/GTP/AAtRNA. The sequence is that of Elongation factor 1-beta from Desulfurococcus amylolyticus (strain DSM 18924 / JCM 16383 / VKM B-2413 / 1221n) (Desulfurococcus kamchatkensis).